A 730-amino-acid chain; its full sequence is Elongation factor 2 (730 aa).

Residues 19-260 (EKIRNIGIVA…MVIRFLPNPL (242 aa)) form the tr-type G domain. Residues 28 to 35 (AHIDHGKT), 94 to 98 (DTPGH), and 148 to 151 (NKVD) contribute to the GTP site. Residue His-596 is modified to Diphthamide.

This sequence belongs to the TRAFAC class translation factor GTPase superfamily. Classic translation factor GTPase family. EF-G/EF-2 subfamily.

It localises to the cytoplasm. Catalyzes the GTP-dependent ribosomal translocation step during translation elongation. During this step, the ribosome changes from the pre-translocational (PRE) to the post-translocational (POST) state as the newly formed A-site-bound peptidyl-tRNA and P-site-bound deacylated tRNA move to the P and E sites, respectively. Catalyzes the coordinated movement of the two tRNA molecules, the mRNA and conformational changes in the ribosome. The polypeptide is Elongation factor 2 (fusA) (Methanosarcina thermophila).